Consider the following 884-residue polypeptide: E3 ubiquitin-protein ligase BRE1-like 1 (884 aa).

The disordered stretch occupies residues M1 to S37. The stretch at Y49–L86 forms a coiled coil. A disordered region spans residues K107–T127. The span at S108–N121 shows a compositional bias: low complexity. Coiled coils occupy residues L216–L541, S580–I663, R696–D762, and K789–R827. The RING-type zinc finger occupies C832–S871.

This sequence belongs to the BRE1 family.

The protein localises to the nucleus. It carries out the reaction S-ubiquitinyl-[E2 ubiquitin-conjugating enzyme]-L-cysteine + [acceptor protein]-L-lysine = [E2 ubiquitin-conjugating enzyme]-L-cysteine + N(6)-ubiquitinyl-[acceptor protein]-L-lysine.. It participates in protein modification; protein ubiquitination. Its function is as follows. E3 ubiquitin-protein ligase that monoubiquitinates H2B to form H2BK143ub1. H2BK143ub1 gives a specific tag for epigenetic transcriptional activation and is also prerequisite for H3K4me and maybe H3K79me. It thereby plays a central role in histone code and gene regulation. Forms a ubiquitin ligase complex in cooperation with the E2 enzyme UBC2/RAD6. The chain is E3 ubiquitin-protein ligase BRE1-like 1 (BRE1A) from Oryza sativa subsp. indica (Rice).